A 265-amino-acid polypeptide reads, in one-letter code: Lysosomal membrane ascorbate-dependent ferrireductase CYB561A3 (265 aa).

The Cytoplasmic segment spans residues 1-2 (MA). Residues 3 to 23 (VGWFYLSVLALCSLGSMCILF) form a helical membrane-spanning segment. The 208-residue stretch at 12–219 (ALCSLGSMCI…FGLLVLYILL (208 aa)) folds into the Cytochrome b561 domain. The Lumenal segment spans residues 24 to 45 (TIYWMRYWHGGFAWDGSMLMFN). The helical transmembrane segment at 46 to 66 (WHPVLMVTGMVVLYSAASLVY) threads the bilayer. Heme b-binding residues include histidine 47 and arginine 67. The Cytoplasmic portion of the chain corresponds to 67–83 (RLPQSWVGPRLPWKSGH). L-ascorbate-binding residues include arginine 76 and lysine 80. Histidine 83 lines the heme b pocket. The chain crosses the membrane as a helical span at residues 84–104 (AAMHLLAFLLTVLGLHAVFEF). At 105–119 (HNHAKIPHLYSLHSW) the chain is on the lumenal side. Heme b is bound by residues 112–115 (HLYS) and histidine 117. A helical transmembrane segment spans residues 120 to 140 (LGITTVFLFACQWFLGFSVFL). The Cytoplasmic portion of the chain corresponds to 141–154 (LPWASMWLRSLLKP). Position 149 (arginine 149) interacts with L-ascorbate. A helical transmembrane segment spans residues 155–175 (IHVFFGASILSLAIASVVSGI). Residues histidine 156 and glutamate 177 each contribute to the heme b site. Residues 176 to 197 (NEKLFFSLKNGTKTYSNLPSEA) are Lumenal-facing. An N-linked (GlcNAc...) asparagine glycan is attached at asparagine 185. A helical membrane pass occupies residues 198 to 218 (VFANCAGMLVVVFGLLVLYIL). The Cytoplasmic portion of the chain corresponds to 219-265 (LASSWKRPEPGMQAEREPTRTRGRAGTPEVMLEGERGLAEPLLQKRS). Position 224 (lysine 224) interacts with heme b. Residues 228 to 238 (PGMQAEREPTR) show a composition bias toward basic and acidic residues. The segment at 228 to 265 (PGMQAEREPTRTRGRAGTPEVMLEGERGLAEPLLQKRS) is disordered.

In terms of assembly, homodimer. The cofactor is heme b. N-glycosylated.

The protein resides in the late endosome membrane. It localises to the lysosome membrane. It catalyses the reaction Fe(3+)(out) + L-ascorbate(in) = monodehydro-L-ascorbate radical(in) + Fe(2+)(out) + H(+). In terms of biological role, transmembrane reductase that uses ascorbate as an electron donor in the cytoplasm and transfers electrons across membranes to reduce iron cations Fe(3+) into Fe(2+) in the lumen of the late endosome and lysosome. Reduced iron can then be extruded from the late endosome and lysosome to the cytoplasm by divalent metal-specific transporters. It is therefore most probably involved in endosomal and lysosomal cellular iron homeostasis. The sequence is that of Lysosomal membrane ascorbate-dependent ferrireductase CYB561A3 from Bos taurus (Bovine).